We begin with the raw amino-acid sequence, 255 residues long: Superoxide dismutase [Fe] 2, chloroplastic (255 aa).

The N-terminal 32 residues, 1–32 (MAAFASALRVLPSPPAAVPRRLRSREQRQGCR), are a transit peptide targeting the chloroplast. The Fe cation site is built by H67, H119, D203, and H207.

This sequence belongs to the iron/manganese superoxide dismutase family. As to quaternary structure, homodimer. Fe cation serves as cofactor. In terms of tissue distribution, strongly expressed in the stems of the young seedlings, etiolated seedlings and embryogenic calli, but only minimally expressed in the leaves and the roots.

It localises to the plastid. Its subcellular location is the chloroplast. It catalyses the reaction 2 superoxide + 2 H(+) = H2O2 + O2. Destroys superoxide anion radicals which are normally produced within the cells and which are toxic to biological systems. This is Superoxide dismutase [Fe] 2, chloroplastic from Oryza sativa subsp. japonica (Rice).